Consider the following 481-residue polypeptide: RAC-alpha serine/threonine-protein kinase (481 aa).

Residues 5-108 (AIVKEGWLHK…WIQVIQHVAD (104 aa)) form the PH domain. Residues 120-141 (VRSGDSPSDNSGAEEMEVSHSK) form a disordered region. 2 O-linked (GlcNAc) serine glycosylation sites follow: S127 and S130. A Protein kinase domain is found at 151-409 (FEYLKLLGKG…AKEIMQHKFF (259 aa)). ATP contacts are provided by residues 157 to 165 (LGKGTFGKV) and K180. The Proton acceptor role is filled by D275. Residue T306 is glycosylated (O-linked (GlcNAc) threonine). T309 carries the post-translational modification Phosphothreonine; by PDPK1. Residue T313 is glycosylated (O-linked (GlcNAc) threonine). Residues 410 to 481 (AGIVWQDVYE…QFSYSASGNA (72 aa)) enclose the AGC-kinase C-terminal domain. A Phosphoserine modification is found at S474. S474 carries an O-linked (GlcNAc) serine; alternate glycan. At Y475 the chain carries Phosphotyrosine.

It belongs to the protein kinase superfamily. AGC Ser/Thr protein kinase family. RAC subfamily. In terms of processing, cleavage by caspase-3/CASP3. Cleaved at the caspase-3 consensus site Asp-463 during apoptosis, resulting in down-regulation of the AKT signaling pathway and decreased cell survival. Phosphorylation on Thr-309 and Ser-474 is required for full activity. Phosphorylation of the activation loop at Thr-309 by PDPK1/PDK1 is a prerequisite for full activation. Phosphorylation by mTORC2 at Ser-474 in response to growth factors plays a key role in AKT1 activation by facilitating subsequent phosphorylation of the activation loop by PDPK1/PDK1. Expressed in the oocyte.

The protein localises to the cytoplasm. It localises to the nucleus. The enzyme catalyses L-seryl-[protein] + ATP = O-phospho-L-seryl-[protein] + ADP + H(+). It catalyses the reaction L-threonyl-[protein] + ATP = O-phospho-L-threonyl-[protein] + ADP + H(+). Its activity is regulated as follows. Activated in response to insulin. Three specific sites, one in the kinase domain (Thr-309) and the two other ones in the C-terminal regulatory region (Ser-474 and Tyr-475), need to be phosphorylated for its full activation. Its function is as follows. AKT1 is one of several closely related serine/threonine-protein kinases known as the AKT kinase, and which regulate many processes including metabolism, proliferation, cell survival, growth and angiogenesis. This is mediated through serine and/or threonine phosphorylation of a range of downstream substrates. Over 100 substrate candidates have been reported so far, but for most of them, no isoform specificity has been reported. Signals downstream of phosphatidylinositol 3-kinase (PI(3)K) to mediate the effects of various growth factors such as platelet-derived growth factor (PDGF), epidermal growth factor (EGF), insulin and insulin-like growth factor 1 (IGF1). Plays a role as a key modulator of the AKT-mTOR signaling pathway controlling the tempo of the process of newborn neurons integration during adult neurogenesis, including correct neuron positioning, dendritic development and synapse formation. Plays a role in glucose transport by mediating insulin-induced translocation of the GLUT4 glucose transporter to the cell surface. Mediates the antiapoptotic effects of IGF1. Mediates insulin-stimulated protein synthesis, partly by playing a role in both insulin-induced phosphorylation of 4E-BP1 and in insulin-induced activation of p70 S6 kinase. Promotes glycogen synthesis by mediating the insulin-induced activation of glycogen synthase. Required for insulin-stimulated meiotic reinitiation during oocyte maturation. May be involved in the regulation of vesicular functions such as preciliary trafficking and endocytic recycling. The sequence is that of RAC-alpha serine/threonine-protein kinase from Xenopus laevis (African clawed frog).